We begin with the raw amino-acid sequence, 476 residues long: ATP synthase subunit beta (476 aa).

154 to 161 (GGAGVGKT) is a binding site for ATP.

This sequence belongs to the ATPase alpha/beta chains family. F-type ATPases have 2 components, CF(1) - the catalytic core - and CF(0) - the membrane proton channel. CF(1) has five subunits: alpha(3), beta(3), gamma(1), delta(1), epsilon(1). CF(0) has three main subunits: a(1), b(2) and c(9-12). The alpha and beta chains form an alternating ring which encloses part of the gamma chain. CF(1) is attached to CF(0) by a central stalk formed by the gamma and epsilon chains, while a peripheral stalk is formed by the delta and b chains.

It localises to the cell inner membrane. The catalysed reaction is ATP + H2O + 4 H(+)(in) = ADP + phosphate + 5 H(+)(out). In terms of biological role, produces ATP from ADP in the presence of a proton gradient across the membrane. The catalytic sites are hosted primarily by the beta subunits. The polypeptide is ATP synthase subunit beta (Nitrobacter hamburgensis (strain DSM 10229 / NCIMB 13809 / X14)).